The primary structure comprises 55 residues: Sec-independent protein translocase protein TatA (55 aa).

A helical transmembrane segment spans residues 1–21; that stretch reads MGMSFSHLLIVLLIIFVLFGA.

Belongs to the TatA/E family. The Tat system comprises two distinct complexes: a TatABC complex, containing multiple copies of TatA, TatB and TatC subunits, and a separate TatA complex, containing only TatA subunits. Substrates initially bind to the TatABC complex, which probably triggers association of the separate TatA complex to form the active translocon.

It localises to the cell inner membrane. Its function is as follows. Part of the twin-arginine translocation (Tat) system that transports large folded proteins containing a characteristic twin-arginine motif in their signal peptide across membranes. TatA could form the protein-conducting channel of the Tat system. This chain is Sec-independent protein translocase protein TatA, found in Rickettsia peacockii (strain Rustic).